The chain runs to 441 residues: GTPase Der (441 aa).

EngA-type G domains are found at residues 4 to 168 and 177 to 352; these read PVVA…PEDI and IRIA…EQNS. Residues 10-17, 57-61, 121-124, 183-190, 230-234, and 295-298 each bind GTP; these read GRPNVGKS, DTGGI, NKVE, DTAGM, and NKWD. The region spanning 353–437 is the KH-like domain; sequence TRVATATLNT…PIRMIVRQKD (85 aa).

It belongs to the TRAFAC class TrmE-Era-EngA-EngB-Septin-like GTPase superfamily. EngA (Der) GTPase family. As to quaternary structure, associates with the 50S ribosomal subunit.

Functionally, GTPase that plays an essential role in the late steps of ribosome biogenesis. The chain is GTPase Der from Desulfitobacterium hafniense (strain DSM 10664 / DCB-2).